Reading from the N-terminus, the 787-residue chain is MERSDSRDFYNFAKTSSDNNSALFDASQYEFFGQSLEEVELGGLDDDGTVRGHVDDEEYHLFDKREGAGLGSLSDMDDLATTFAKLNRNVTGPKHLGVIGDRGSGSFSRESSTATDWTQDNEFTSWLDQHTVEEQVQEASWSSQPQSSPNSNSLYRTSSYPQQQTQLQHYSSEPIIVPESTFTSFPSPGKRSQQSSPSHIHRAPSLPGGSQSNFSAPNASPLSNSTFHLSGLSHGPSHYGNNLARYASCGPTLGNMVQQPPHWVTDPGLLHGDHSALLHSLMQQQHLQQLPPRNGFTSQQLISLQQRQSLAHLAALQSQLYSSYPSPSHKALFGVGEVREHKHKSSHRSRKNRGGISQQTSDLASQKSESGLQFRSKYMTSEEIESILKMQHSNSHSSDPYVNDYYHQARLAKKSSGSRTKPQLYPSHLKDHQSRSRNSSDQQPQVHVDALGKITLPSICRPRALLEVDSPPSSGHKHLEDEPLVAARVTIEDAFGVLIDIVDIDRTLQFNRPQDGGAQLRRKRQILLEGLATSLQLVDPFSKTGQKTGLTTKDDIVFLRITTLPKGRKLLTKYLQLLVPGTEIARVVCMAVFRHLRFLFGGLPSDSLAAETIANLAKAVTVCVQAMDLRALSACLAAVVCSSEQPPLRPIGSSSGDGASVVLVSLLERAAEVIVAVVPPRVSNHGNPNDGLWRASFDEFFSLLTKYCRSKYETIHGQNHDNAADVLELAIKREMPAELLRASLRHTNEDQRNFLLNVGRSASPVSESTTTRASASGGQINSEFVRG.

5 disordered regions span residues 94–120, 134–221, 338–374, 411–445, and 765–787; these read KHLGVIGDRGSGSFSRESSTATDWTQD, EQVQ…NASP, VREHKHKSSHRSRKNRGGISQQTSDLASQKSESGLQF, LAKKSSGSRTKPQLYPSHLKDHQSRSRNSSDQQPQ, and VSESTTTRASASGGQINSEFVRG. Over residues 105-120 the composition is skewed to polar residues; that stretch reads GSFSRESSTATDWTQD. Residues 142–153 are compositionally biased toward low complexity; the sequence is SSQPQSSPNSNS. Polar residues-rich tracts occupy residues 154–171, 180–198, and 208–221; these read LYRTSSYPQQQTQLQHYS, STFTSFPSPGKRSQQSSPS, and GGSQSNFSAPNASP. Residues Ser184 and Ser192 each carry the phosphoserine modification. Positions 341–353 are enriched in basic residues; the sequence is HKHKSSHRSRKNR. 2 stretches are compositionally biased toward polar residues: residues 355–373 and 436–445; these read GISQQTSDLASQKSESGLQ and SRNSSDQQPQ.

Activator of mRNA decapping. Involved in mRNA decay via decapping. The sequence is that of Protein PAT1 homolog 2 from Arabidopsis thaliana (Mouse-ear cress).